We begin with the raw amino-acid sequence, 156 residues long: UPF0232 protein BL0636 (156 aa).

Belongs to the UPF0232 family.

In Bifidobacterium longum (strain NCC 2705), this protein is UPF0232 protein BL0636.